Reading from the N-terminus, the 420-residue chain is DNA primase small subunit (420 aa).

At M1 the chain carries N-acetylmethionine. Catalysis depends on residues E44, D109, and D111. The Mg(2+) site is built by D109 and D111. D109 and D111 together coordinate Mn(2+). A ribonucleoside 5'-triphosphate is bound at residue 109–111 (DID). Residues C121, C122, C128, and C131 each coordinate Zn(2+). The Zinc knuckle motif signature appears at 121–131 (CCSSADICPKC). Residue 160-166 (SGRRGVH) coordinates a ribonucleoside 5'-triphosphate. D306 contacts Mg(2+). Position 306 (D306) interacts with Mn(2+). A ribonucleoside 5'-triphosphate contacts are provided by residues 315–318 (HLLK) and H324. The span at 363–373 (NEEEKEENEAE) shows a compositional bias: acidic residues. Residues 363-382 (NEEEKEENEAESDVKHRTRD) are disordered.

The protein belongs to the eukaryotic-type primase small subunit family. As to quaternary structure, heterodimer of a catalytic subunit PRIM1 and a regulatory subunit PRIM2, also known as the DNA primase complex. Interacts with PRIM2 (via C-terminus). Component of the alpha DNA polymerase complex (also known as the alpha DNA polymerase-primase complex) consisting of four subunits: the catalytic subunit POLA1, the regulatory subunit POLA2, and the primase complex subunits PRIM1 and PRIM2 respectively. Within the complex, POLA1 directly interacts with PRIM2. Requires Mg(2+) as cofactor. Mn(2+) serves as cofactor.

It carries out the reaction ssDNA + n NTP = ssDNA/pppN(pN)n-1 hybrid + (n-1) diphosphate.. The presence of the regulatory subunit PRIM2/p58 accelerates the kinetics of initiation and primer extension. Inhibited by arabinose nucleoside derivatives such as fludarabine and vidarabine. Its function is as follows. Catalytic subunit of the DNA primase complex and component of the DNA polymerase alpha complex (also known as the alpha DNA polymerase-primase complex - primosome/replisome) which play an essential role in the initiation of DNA synthesis. During the S phase of the cell cycle, the DNA polymerase alpha complex (composed of a catalytic subunit POLA1, an accessory subunit POLA2 and two primase subunits, the catalytic subunit PRIM1 and the regulatory subunit PRIM2) is recruited to DNA at the replicative forks via direct interactions with MCM10 and WDHD1. The primase subunit of the polymerase alpha complex initiates DNA synthesis by oligomerising short RNA primers on both leading and lagging strands. These primers are initially extended by the polymerase alpha catalytic subunit and subsequently transferred to polymerase delta and polymerase epsilon for processive synthesis on the lagging and leading strand, respectively. In the primase complex, both subunits are necessary for the initial di-nucleotide formation, but the extension of the primer depends only on the catalytic subunit. Synthesizes 9-mer RNA primers (also known as the 'unit length' RNA primers). Incorporates only ribonucleotides in the presence of ribo- and deoxy-nucleotide triphosphates (rNTPs, dNTPs). Requires template thymine or cytidine to start the RNA primer synthesis, with an adenine or guanine at its 5'-end. Binds single stranded DNA. The sequence is that of DNA primase small subunit (PRIM1) from Homo sapiens (Human).